The primary structure comprises 187 residues: Ribosome-recycling factor (187 aa).

This sequence belongs to the RRF family.

The protein localises to the cytoplasm. Functionally, responsible for the release of ribosomes from messenger RNA at the termination of protein biosynthesis. May increase the efficiency of translation by recycling ribosomes from one round of translation to another. This chain is Ribosome-recycling factor, found in Petrotoga mobilis (strain DSM 10674 / SJ95).